The primary structure comprises 66 residues: U1-theraphotoxin-Cg1b (66 aa).

The N-terminal stretch at 1–21 (MKTSALFVIFGLVLLFCNSFA) is a signal peptide. The propeptide occupies 22 to 29 (AELKTTGR). 3 disulfide bridges follow: Cys-31-Cys-46, Cys-38-Cys-51, and Cys-45-Cys-58.

It belongs to the neurotoxin 10 (Hwtx-1) family. 46 (Jztx-7/10/12) subfamily. Expressed by the venom gland.

It localises to the secreted. Its function is as follows. Probable ion channel inhibitor. This is U1-theraphotoxin-Cg1b from Chilobrachys guangxiensis (Chinese earth tiger tarantula).